We begin with the raw amino-acid sequence, 120 residues long: uncharacterized protein (120 aa).

This is an uncharacterized protein from Mycoplasma pneumoniae (strain ATCC 29342 / M129 / Subtype 1) (Mycoplasmoides pneumoniae).